Here is a 124-residue protein sequence, read N- to C-terminus: Late embryogenesis abundant protein 37 (124 aa).

Residues 1 to 35 constitute a mitochondrion transit peptide; sequence MSQSLFNLKSLSRSINNTIRMRRYIVITKASQRAY.

This sequence belongs to the LEA type 3 family.

The protein resides in the mitochondrion. The protein is Late embryogenesis abundant protein 37 of Arabidopsis thaliana (Mouse-ear cress).